The sequence spans 595 residues: Isoprene synthase, chloroplastic (595 aa).

Residues 1 to 37 (MATELLCLHRPISLTHKLFRNPLPKVIQATPLTLKLR) constitute a chloroplast transit peptide. Asp-345 serves as a coordination point for dimethylallyl diphosphate. 2 residues coordinate Mg(2+): Asp-345 and Asp-349. The DDXXD motif signature appears at 345 to 349 (DDIYD). Dimethylallyl diphosphate is bound by residues Glu-423, Arg-486, and Asn-489. Positions 489, 493, and 497 each coordinate Mg(2+).

This sequence belongs to the terpene synthase family. Tpsb subfamily. The cofactor is Mg(2+). Requires Mn(2+) as cofactor.

It is found in the plastid. The protein localises to the chloroplast. It carries out the reaction dimethylallyl diphosphate = isoprene + diphosphate. Functionally, lyase that catalyzes the formation of isoprene from dimethylallyl diphosphate. This chain is Isoprene synthase, chloroplastic (ISPS), found in Populus tremuloides (Quaking aspen).